Here is a 227-residue protein sequence, read N- to C-terminus: Small ribosomal subunit protein uS3 (227 aa).

The region spanning 39 to 108 is the KH type-2 domain; that stretch reads IRKFIEERYK…EVIVNVDEVK (70 aa).

The protein belongs to the universal ribosomal protein uS3 family. Part of the 30S ribosomal subunit. Forms a tight complex with proteins S10 and S14.

Its function is as follows. Binds the lower part of the 30S subunit head. Binds mRNA in the 70S ribosome, positioning it for translation. This chain is Small ribosomal subunit protein uS3, found in Sulfurihydrogenibium sp. (strain YO3AOP1).